The chain runs to 327 residues: Aspartate--ammonia ligase (327 aa).

This sequence belongs to the class-II aminoacyl-tRNA synthetase family. AsnA subfamily.

Its subcellular location is the cytoplasm. The enzyme catalyses L-aspartate + NH4(+) + ATP = L-asparagine + AMP + diphosphate + H(+). It functions in the pathway amino-acid biosynthesis; L-asparagine biosynthesis; L-asparagine from L-aspartate (ammonia route): step 1/1. The polypeptide is Aspartate--ammonia ligase (Bacillus cereus (strain AH820)).